The sequence spans 193 residues: MLLLLLPLLLAAVLTRTQADPVPRATRLPVEAKDCHIAQFKSLSPKELQAFKKAKDAIEKRLLEKDLRCSSHLFPRAWDLKQLQVQERPKALQAEVALTLKVWENMTDSALATILGQPLHTLSHIHSQLQTCTQLQATAEPRSPSRRLSRWLHRLQEAQSKETPGCLEASVTSNLFRLLTRDLKCVANGDQCV.

A signal peptide spans Met-1 to Ala-19. Residue Asn-105 is glycosylated (N-linked (GlcNAc...) asparagine).

Belongs to the lambda interferon family.

It is found in the secreted. In terms of biological role, cytokine with antiviral, antitumour and immunomodulatory activities. Plays a critical role in the antiviral host defense, predominantly in the epithelial tissues. Acts as a ligand for the heterodimeric class II cytokine receptor composed of IL10RB and IFNLR1, and receptor engagement leads to the activation of the JAK/STAT signaling pathway resulting in the expression of IFN-stimulated genes (ISG), which mediate the antiviral state. Has a restricted receptor distribution and therefore restricted targets: is primarily active in epithelial cells and this cell type-selective action is because of the epithelial cell-specific expression of its receptor IFNLR1. Seems not to be essential for early virus-activated host defense in vaginal infection, but plays an important role in Toll-like receptor (TLR)-induced antiviral defense. Plays a significant role in the antiviral immune defense in the intestinal epithelium. Exerts an immunomodulatory effect by up-regulating MHC class I antigen expression. This chain is Interferon lambda-2 (Ifnl2), found in Mus musculus (Mouse).